Here is a 352-residue protein sequence, read N- to C-terminus: tRNA(Ile)-lysidine synthase (352 aa).

58–63 (SGGADS) contacts ATP.

Belongs to the tRNA(Ile)-lysidine synthase family.

It is found in the cytoplasm. It catalyses the reaction cytidine(34) in tRNA(Ile2) + L-lysine + ATP = lysidine(34) in tRNA(Ile2) + AMP + diphosphate + H(+). Ligates lysine onto the cytidine present at position 34 of the AUA codon-specific tRNA(Ile) that contains the anticodon CAU, in an ATP-dependent manner. Cytidine is converted to lysidine, thus changing the amino acid specificity of the tRNA from methionine to isoleucine. This Streptomyces coelicolor (strain ATCC BAA-471 / A3(2) / M145) protein is tRNA(Ile)-lysidine synthase.